Consider the following 95-residue polypeptide: Protein TusB (95 aa).

The protein belongs to the DsrH/TusB family. As to quaternary structure, heterohexamer, formed by a dimer of trimers. The hexameric TusBCD complex contains 2 copies each of TusB, TusC and TusD. The TusBCD complex interacts with TusE.

It localises to the cytoplasm. Its function is as follows. Part of a sulfur-relay system required for 2-thiolation of 5-methylaminomethyl-2-thiouridine (mnm(5)s(2)U) at tRNA wobble positions. The chain is Protein TusB from Yersinia pseudotuberculosis serotype O:1b (strain IP 31758).